Consider the following 90-residue polypeptide: U7-theraphotoxin-Hhn1c (90 aa).

Residues M1–S19 form the signal peptide. Positions F20–E50 are excised as a propeptide. 3 disulfide bridges follow: C51-C65, C58-C70, and C64-C81.

It belongs to the neurotoxin 10 (Hwtx-1) family. 13 (Hntx-13) subfamily. In terms of tissue distribution, expressed by the venom gland.

It is found in the secreted. In terms of biological role, ion channel inhibitor. The sequence is that of U7-theraphotoxin-Hhn1c from Cyriopagopus hainanus (Chinese bird spider).